The sequence spans 1202 residues: Caskin-2 (1202 aa).

ANK repeat units follow at residues 48 to 77 (DGFSALHHAALGGSLELIALLLEAQATVDI), 81 to 110 (NGMRPLHYAAWQGRLEPVRLLLRASAAVNA), 114 to 143 (DGQIPLHLAAQYGHYEVSEMLLQHQSNPCL), 147 to 176 (AKKTPLDLACEFGRLKVAQLLLNSHLCVAL), 188 to 217 (NYTTPLHLAAKNGHREVIRQLLRAGIEINR), and 220 to 249 (KTGTALHEAALYGKTEVVRLLLEGGVDVNI). A Phosphotyrosine modification is found at Y253. The SH3 domain occupies 281–347 (SGILKVRALK…PPGIVEVVSK (67 aa)). The disordered stretch occupies residues 355 to 460 (RLPSAPTPLR…GLHPPSLADN (106 aa)). Phosphoserine occurs at positions 358, 393, 396, 403, 406, and 409. Positions 415–425 (SAGSGQSSEGT) are enriched in polar residues. S471 carries the phosphoserine modification. SAM domains are found at residues 489–552 (KDAQ…LSIA) and 558–622 (YIPT…LAEL). Disordered stretches follow at residues 676 to 1104 (LQAA…APKP) and 1116 to 1181 (GPKL…STKH). S725 bears the Phosphoserine mark. The segment covering 731-740 (NLPEGTERPP) has biased composition (basic and acidic residues). Positions 765 to 774 (SPAPGPPPGA) are enriched in pro residues. Phosphoserine is present on residues S858, S877, S878, and S892. A compositionally biased stretch (pro residues) spans 913-923 (PSEPPGPPAPA). The span at 940–949 (PPSRGSSGEG) shows a compositional bias: low complexity. Composition is skewed to pro residues over residues 966–978 (PAGPPPRETPVPP) and 1018–1030 (PAAPLPSPTPGES). Over residues 1031–1051 (PPASSLPQPEPSSLPAQGVPT) the composition is skewed to low complexity. 2 stretches are compositionally biased toward pro residues: residues 1052 to 1068 (PLAPSPAMQPPVPPCPG) and 1124 to 1133 (GPRPVPPPRP). Residues 1135–1151 (STGTVGPGQAQQRLEQT) are compositionally biased toward polar residues. Over residues 1161-1172 (AAEKSIGTKEQE) the composition is skewed to basic and acidic residues.

May not bind CASK.

The protein resides in the cytoplasm. The sequence is that of Caskin-2 (CASKIN2) from Homo sapiens (Human).